Reading from the N-terminus, the 304-residue chain is Bifunctional protein FolD (304 aa).

NADP(+)-binding positions include 167-169 (GRS), Ser192, and Ile233.

It belongs to the tetrahydrofolate dehydrogenase/cyclohydrolase family. As to quaternary structure, homodimer.

The catalysed reaction is (6R)-5,10-methylene-5,6,7,8-tetrahydrofolate + NADP(+) = (6R)-5,10-methenyltetrahydrofolate + NADPH. It carries out the reaction (6R)-5,10-methenyltetrahydrofolate + H2O = (6R)-10-formyltetrahydrofolate + H(+). The protein operates within one-carbon metabolism; tetrahydrofolate interconversion. Catalyzes the oxidation of 5,10-methylenetetrahydrofolate to 5,10-methenyltetrahydrofolate and then the hydrolysis of 5,10-methenyltetrahydrofolate to 10-formyltetrahydrofolate. This Rhodospirillum centenum (strain ATCC 51521 / SW) protein is Bifunctional protein FolD.